The following is a 158-amino-acid chain: 2-C-methyl-D-erythritol 2,4-cyclodiphosphate synthase (158 aa).

Residues aspartate 9 and histidine 11 each contribute to the a divalent metal cation site. Residues 9–11 and 35–36 contribute to the 4-CDP-2-C-methyl-D-erythritol 2-phosphate site; these read DVH and HS. Histidine 43 contributes to the a divalent metal cation binding site. 4-CDP-2-C-methyl-D-erythritol 2-phosphate-binding positions include 57-59, 62-66, 133-136, phenylalanine 140, and arginine 143; these read DIG, FPDTD, and TTTE.

The protein belongs to the IspF family. In terms of assembly, homotrimer. The cofactor is a divalent metal cation.

It catalyses the reaction 4-CDP-2-C-methyl-D-erythritol 2-phosphate = 2-C-methyl-D-erythritol 2,4-cyclic diphosphate + CMP. The protein operates within isoprenoid biosynthesis; isopentenyl diphosphate biosynthesis via DXP pathway; isopentenyl diphosphate from 1-deoxy-D-xylulose 5-phosphate: step 4/6. Involved in the biosynthesis of isopentenyl diphosphate (IPP) and dimethylallyl diphosphate (DMAPP), two major building blocks of isoprenoid compounds. Catalyzes the conversion of 4-diphosphocytidyl-2-C-methyl-D-erythritol 2-phosphate (CDP-ME2P) to 2-C-methyl-D-erythritol 2,4-cyclodiphosphate (ME-CPP) with a corresponding release of cytidine 5-monophosphate (CMP). The polypeptide is 2-C-methyl-D-erythritol 2,4-cyclodiphosphate synthase (Haemophilus influenzae (strain 86-028NP)).